A 595-amino-acid chain; its full sequence is Merlin (595 aa).

S13 carries the post-translational modification Phosphoserine. Residues 22 to 311 (FTVRIVTMDA…GNHDLFMRRR (290 aa)) form the FERM domain. S518 is modified (phosphoserine; by PAK).

As to quaternary structure, interacts with NHERF1, HGS and AGAP2. Interacts with SGSM3. Interacts (via FERM domain) with MPP1. Interacts with LAYN and WWC1. Interacts with the CUL4A-RBX1-DDB1-VprBP/DCAF1 E3 ubiquitin-protein ligase complex. The unphosphorylated form interacts (via FERM domain) with VPRBP/DCAF1. Interacts (via FERM domain) with NOP53; the interaction is direct. Interacts with SCHIP1; the interaction is direct. Phosphorylation of Ser-518 inhibits nuclear localization by disrupting the intramolecular association of the FERM domain with the C-terminal tail. In terms of processing, ubiquitinated by the CUL4A-RBX1-DDB1-DCAF1/VprBP E3 ubiquitin-protein ligase complex for ubiquitination and subsequent proteasome-dependent degradation. Post-translationally, phosphorylation of Ser-518 inhibits nuclear localization by disrupting the intramolecular association of the FERM domain with the C-terminal tail. The dephosphorylation of Ser-518 favors the interaction with NOP53.

Its subcellular location is the cell membrane. The protein localises to the cell projection. The protein resides in the cytoplasm. It localises to the cytoskeleton. It is found in the nucleus. In terms of biological role, probable regulator of the Hippo/SWH (Sav/Wts/Hpo) signaling pathway, a signaling pathway that plays a pivotal role in tumor suppression by restricting proliferation and promoting apoptosis. Along with WWC1 can synergistically induce the phosphorylation of LATS1 and LATS2 and can probably function in the regulation of the Hippo/SWH (Sav/Wts/Hpo) signaling pathway. May act as a membrane stabilizing protein. May inhibit PI3 kinase by binding to AGAP2 and impairing its stimulating activity. Suppresses cell proliferation and tumorigenesis by inhibiting the CUL4A-RBX1-DDB1-VprBP/DCAF1 E3 ubiquitin-protein ligase complex. The polypeptide is Merlin (NF2) (Papio anubis (Olive baboon)).